The sequence spans 894 residues: Translation initiation factor IF-2 (894 aa).

A disordered region spans residues 52-301 (DRGAAPNKLT…RRPSTLTQGF (250 aa)). Residues 68–82 (STLNIPSTGGKSKSV) are compositionally biased toward polar residues. Residues 107 to 154 (EQARREAEELAQHQVQRDAEEKAKRAAEDKAKREAAEQAKRVAAESDK) show a composition bias toward basic and acidic residues. The segment covering 155–168 (LTNQQTNTMTKSPQ) has biased composition (polar residues). Composition is skewed to basic and acidic residues over residues 171-214 (EKAR…ERGG) and 237-254 (HAREAEDENDRKVEGDRR). The segment covering 255 to 269 (SRTRGGKATKQKKTS) has biased composition (basic residues). A compositionally biased stretch (basic and acidic residues) spans 270–283 (RLSESKADREEARA). The tr-type G domain occupies 393–562 (SRAPVVTIMG…LLQAEVLELK (170 aa)). The tract at residues 402-409 (GHVDHGKT) is G1. 402–409 (GHVDHGKT) is a binding site for GTP. The tract at residues 427–431 (GITQH) is G2. Residues 448–451 (DTPG) form a G3 region. GTP is bound by residues 448 to 452 (DTPGH) and 502 to 505 (NKID). Positions 502–505 (NKID) are G4. The interval 538–540 (SAK) is G5.

Belongs to the TRAFAC class translation factor GTPase superfamily. Classic translation factor GTPase family. IF-2 subfamily.

The protein localises to the cytoplasm. Functionally, one of the essential components for the initiation of protein synthesis. Protects formylmethionyl-tRNA from spontaneous hydrolysis and promotes its binding to the 30S ribosomal subunits. Also involved in the hydrolysis of GTP during the formation of the 70S ribosomal complex. The chain is Translation initiation factor IF-2 from Sodalis glossinidius (strain morsitans).